We begin with the raw amino-acid sequence, 273 residues long: N-alpha-acetyltransferase 30 (273 aa).

Disordered regions lie at residues 1–39 (MADA…HQLN) and 62–85 (QKTR…PNGL). In terms of domain architecture, N-acetyltransferase spans 125-273 (RYVRYESELQ…DALRLKLWLR (149 aa)).

Belongs to the acetyltransferase family. MAK3 subfamily. In terms of assembly, component of the N-terminal acetyltransferase C (NatC) complex.

The protein resides in the cytoplasm. The protein localises to the nucleus. It carries out the reaction N-terminal L-methionyl-L-leucyl-[protein] + acetyl-CoA = N-terminal N(alpha)-acetyl-L-methionyl-L-leucyl-[protein] + CoA + H(+). The enzyme catalyses N-terminal L-methionyl-L-isoleucyl-[protein] + acetyl-CoA = N-terminal N(alpha)-acetyl-L-methionyl-L-isoleucyl-[protein] + CoA + H(+). It catalyses the reaction N-terminal L-methionyl-L-phenylalanyl-[protein] + acetyl-CoA = N-terminal N(alpha)-acetyl-L-methionyl-L-phenylalanyl-[protein] + CoA + H(+). The catalysed reaction is N-terminal L-methionyl-L-tryptophyl-[protein] + acetyl-CoA = N-terminal N(alpha)-acetyl-L-methionyl-L-tryptophyl-[protein] + CoA + H(+). It carries out the reaction N-terminal L-methionyl-L-tyrosyl-[protein] + acetyl-CoA = N-terminal N(alpha)-acetyl-L-methionyl-L-tyrosyl-[protein] + CoA + H(+). Its function is as follows. Catalytic subunit of the N-terminal acetyltransferase C (NatC) complex. Catalyzes acetylation of the N-terminal methionine residues of peptides beginning with Met-Leu-Ala and Met-Leu-Gly. N-terminal acetylation protects proteins from ubiquitination and degradation by the N-end rule pathway. In Xenopus laevis (African clawed frog), this protein is N-alpha-acetyltransferase 30 (naa30).